Consider the following 1560-residue polypeptide: uncharacterized protein (1560 aa).

The interval 1-46 (MEEIENAHYQNLENFNDETSEDVNDTSDDINKNNDDNNKYDDNNVN) is disordered. Positions 15 to 28 (FNDETSEDVNDTSD) are enriched in acidic residues. Positions 29 to 46 (DINKNNDDNNKYDDNNVN) are enriched in basic and acidic residues. Coiled coils occupy residues 36 to 60 (DNNKYDDNNVNVLDDKNKLENEEDN) and 317 to 359 (KKNN…NNNN). The segment at 568–594 (KKKKKKNDHHERDSDNNNNDSNNNNYY) is disordered. Positions 583 to 594 (NNNNDSNNNNYY) are enriched in low complexity. A coiled-coil region spans residues 1188-1239 (DTTNNILNKQNESLDNLKKNMYLSKNNYDNQLSSYKNTKQNKTNINEKYNNN). Transmembrane regions (helical) follow at residues 1271–1291 (LYISSMLYINIYLCQIFFILL) and 1314–1334 (LDYFYLLILLNFYSLFYILIS).

It is found in the membrane. This is an uncharacterized protein from Plasmodium falciparum (isolate 3D7).